Here is a 371-residue protein sequence, read N- to C-terminus: Queuine tRNA-ribosyltransferase (371 aa).

The active-site Proton acceptor is the D90. Substrate-binding positions include 90-94 (DSGGF), D144, Q188, and G215. The segment at 246–252 (GVGTPED) is RNA binding. D265 acts as the Nucleophile in catalysis. Residues 270 to 274 (TRNAR) are RNA binding; important for wobble base 34 recognition. Residues C303, C305, C308, and H334 each coordinate Zn(2+).

The protein belongs to the queuine tRNA-ribosyltransferase family. As to quaternary structure, homodimer. Within each dimer, one monomer is responsible for RNA recognition and catalysis, while the other monomer binds to the replacement base PreQ1. It depends on Zn(2+) as a cofactor.

The catalysed reaction is 7-aminomethyl-7-carbaguanine + guanosine(34) in tRNA = 7-aminomethyl-7-carbaguanosine(34) in tRNA + guanine. Its pathway is tRNA modification; tRNA-queuosine biosynthesis. In terms of biological role, catalyzes the base-exchange of a guanine (G) residue with the queuine precursor 7-aminomethyl-7-deazaguanine (PreQ1) at position 34 (anticodon wobble position) in tRNAs with GU(N) anticodons (tRNA-Asp, -Asn, -His and -Tyr). Catalysis occurs through a double-displacement mechanism. The nucleophile active site attacks the C1' of nucleotide 34 to detach the guanine base from the RNA, forming a covalent enzyme-RNA intermediate. The proton acceptor active site deprotonates the incoming PreQ1, allowing a nucleophilic attack on the C1' of the ribose to form the product. After dissociation, two additional enzymatic reactions on the tRNA convert PreQ1 to queuine (Q), resulting in the hypermodified nucleoside queuosine (7-(((4,5-cis-dihydroxy-2-cyclopenten-1-yl)amino)methyl)-7-deazaguanosine). This chain is Queuine tRNA-ribosyltransferase, found in Neisseria meningitidis serogroup B (strain ATCC BAA-335 / MC58).